Consider the following 507-residue polypeptide: Protein zntA (507 aa).

The signal sequence occupies residues 1-18; sequence MSIFAYSILAGLAPLLSS. An N-linked (GlcNAc...) asparagine glycan is attached at Asn31. A helical membrane pass occupies residues 35–55; sequence FHILLCISAGLLFAVASLELI. The segment at 124-179 is disordered; the sequence is GLNLNNLNQATNLDNNEEDNDNLDNDGENEIENDHDHDHQEDEGGDNDHDHESEEK. Residues 125–137 show a composition bias toward low complexity; it reads LNLNNLNQATNLD. The span at 138-154 shows a compositional bias: acidic residues; the sequence is NNEEDNDNLDNDGENEI. Residues 155-179 are compositionally biased toward basic and acidic residues; it reads ENDHDHDHQEDEGGDNDHDHESEEK. Residues 185–205 form a helical membrane-spanning segment; that stretch reads IPMYGIGFGFAILIIVESIFS. Residues 209–264 are disordered; sequence GGGGGGGHHSHSHGSLSSSSSNDVISDYISNNNSNNINNNDDDNNNNNNNNDDDDD. Residues 221–258 show a composition bias toward low complexity; the sequence is HGSLSSSSSNDVISDYISNNNSNNINNNDDDNNNNNNN. 5 N-linked (GlcNAc...) asparagine glycosylation sites follow: Asn240, Asn298, Asn328, Asn342, and Asn351. Residues 305 to 350 form a disordered region; it reads PNIASPVMNKDNNNNDKDKNRNSNKSDIKNSGSINNGNNSGNNNNN. Residues 317–332 show a composition bias toward basic and acidic residues; that stretch reads NNNDKDKNRNSNKSDI. A compositionally biased stretch (low complexity) spans 333-350; that stretch reads KNSGSINNGNNSGNNNNN. 5 consecutive transmembrane segments (helical) span residues 355 to 375, 388 to 408, 422 to 442, 451 to 471, and 486 to 506; these read LTIT…VVIS, VALA…SLIL, FFYF…SSFL, GAFV…TAIL, and LFSI…FHGA.

The protein belongs to the ZIP transporter (TC 2.A.5) family.

It is found in the membrane. Its function is as follows. May transport divalent cations. May participate, with dstA, in the regulation of the differentiation of stalk cells during development. The chain is Protein zntA (zntA) from Dictyostelium discoideum (Social amoeba).